A 69-amino-acid polypeptide reads, in one-letter code: Large ribosomal subunit protein bL32c (69 aa).

The protein belongs to the bacterial ribosomal protein bL32 family.

It is found in the plastid. Its subcellular location is the chloroplast. The polypeptide is Large ribosomal subunit protein bL32c (rpl32) (Marchantia polymorpha (Common liverwort)).